The following is a 3174-amino-acid chain: Probable polyketide synthase 15 (3174 aa).

A Ketosynthase family 3 (KS3) domain is found at 23–474 (NDEIAIVGIG…GSNCCLILSQ (452 aa)). Active-site for beta-ketoacyl synthase activity residues include Cys194, His342, and His397. Coiled-coil stretches lie at residues 472-509 (LSQF…QYDN) and 574-604 (EFNK…RVQT). Over residues 578–599 (QKQSQKEKEKEKEREGEEKEQL) the composition is skewed to basic and acidic residues. Residues 578 to 601 (QKQSQKEKEKEKEREGEEKEQLNR) form a disordered region. Positions 707 to 740 (GIEASFIVGHSLGEIPAAYCSGMITLDTLCYLIY) are acyl/malonyl transferase. Ser717 serves as the catalytic For acyl/malonyl transferase activity. The tract at residues 1034–1156 (IDILGLSNYD…ANFQLLNNNN (123 aa)) is N-terminal hotdog fold. Positions 1034–1332 (IDILGLSNYD…CKSLKIVKNP (299 aa)) constitute a PKS/mFAS DH domain. His1068 (proton acceptor; for dehydratase activity) is an active-site residue. Positions 1182–1332 (NKTKISRIDL…CKSLKIVKNP (151 aa)) are C-terminal hotdog fold. The active-site Proton donor; for dehydratase activity is the Asp1241. The stretch at 1758–1793 (LEININNNNNNNNNNNNNNNNNNNNNNNNNNYEDNV) forms a coiled coil. Positions 2653–2730 (VDSLNIKDIF…LVIKIIITAI (78 aa)) constitute a Carrier domain. Ser2690 carries the O-(pantetheine 4'-phosphoryl)serine modification.

It depends on pantetheine 4'-phosphate as a cofactor.

Probable polyketide synthase. This is Probable polyketide synthase 15 (pks15) from Dictyostelium discoideum (Social amoeba).